The chain runs to 907 residues: Catenin alpha-1 (907 aa).

The residue at position 2 (Thr2) is an N-acetylthreonine. The involved in homodimerization stretch occupies residues 2 to 228 (TAVHAGNINF…PILYTASQAC (227 aa)). A Glycyl lysine isopeptide (Lys-Gly) (interchain with G-Cter in SUMO2) cross-link involves residue Lys57. The interaction with JUP and CTNNB1 stretch occupies residues 97-148 (VRKQGDLMKSAAGEFADDPCSSVKRGNMVRAARALLSAVTRLLILADMADVY). Phosphoserine is present on residues Ser264, Ser268, Ser296, and Ser298. The interval 326–395 (TRDDRRERIV…AVMDHVSDSF (70 aa)) is interaction with alpha-actinin. Thr635 bears the Phosphothreonine mark. Ser642 carries the phosphoserine modification. Residue Thr646 is modified to Phosphothreonine. A phosphoserine mark is found at Ser653 and Ser656. The residue at position 659 (Thr659) is a Phosphothreonine. Lys798 is covalently cross-linked (Glycyl lysine isopeptide (Lys-Gly) (interchain with G-Cter in SUMO2)). Phosphoserine is present on Ser852. A compositionally biased stretch (basic and acidic residues) spans 865-881 (PEKKPLVKREKQDETQT). Residues 865 to 895 (PEKKPLVKREKQDETQTKIKRASQKKHVNPV) form a disordered region. Positions 882-892 (KIKRASQKKHV) are enriched in basic residues.

The protein belongs to the vinculin/alpha-catenin family. As to quaternary structure, monomer and homodimer; the monomer preferentially binds to CTNNB1 and the homodimer to actin. Component of an cadherin:catenin adhesion complex composed of at least of CDH26, beta-catenin/CTNNB1, alpha-catenin/CTNNA1 and p120 catenin/CTNND1. Possible component of an E-cadherin/ catenin adhesion complex together with E-cadherin/CDH1 and beta-catenin/CTNNB1 or gamma-catenin/JUP; the complex is located to adherens junctions. The stable association of CTNNA1 is controversial as CTNNA1 was shown not to bind to F-actin when assembled in the complex. Alternatively, the CTNNA1-containing complex may be linked to F-actin by other proteins such as LIMA1. Binds AFDN and F-actin. Interacts with ARHGAP21. Interacts with AJUBA. Interacts with LIMA1. Interacts with vinculin/VCL. Interacts with TJP2/ZO2 (via N-terminus). Interacts with TJP1/ZO1 (via N-terminus). Sumoylated. In terms of processing, phosphorylation seems to contribute to the strength of cell-cell adhesion rather than to the basic capacity for cell-cell adhesion.

It is found in the cytoplasm. Its subcellular location is the cytoskeleton. It localises to the cell junction. The protein resides in the adherens junction. The protein localises to the cell membrane. It is found in the nucleus. Its function is as follows. Associates with the cytoplasmic domain of a variety of cadherins. The association of catenins to cadherins produces a complex which is linked to the actin filament network, and which seems to be of primary importance for cadherins cell-adhesion properties. Can associate with both E- and N-cadherins. Originally believed to be a stable component of E-cadherin/catenin adhesion complexes and to mediate the linkage of cadherins to the actin cytoskeleton at adherens junctions. In contrast, cortical actin was found to be much more dynamic than E-cadherin/catenin complexes and CTNNA1 was shown not to bind to F-actin when assembled in the complex suggesting a different linkage between actin and adherens junctions components. The homodimeric form may regulate actin filament assembly and inhibit actin branching by competing with the Arp2/3 complex for binding to actin filaments. Involved in the regulation of WWTR1/TAZ, YAP1 and TGFB1-dependent SMAD2 and SMAD3 nuclear accumulation. May play a crucial role in cell differentiation. The sequence is that of Catenin alpha-1 from Oryctolagus cuniculus (Rabbit).